Reading from the N-terminus, the 283-residue chain is Tryptophan 2,3-dioxygenase (283 aa).

Substrate is bound by residues Phe52–His56, Tyr114, and Arg118. His241 contacts heme. Thr255 lines the substrate pocket.

It belongs to the tryptophan 2,3-dioxygenase family. In terms of assembly, homotetramer. Heme serves as cofactor.

It catalyses the reaction L-tryptophan + O2 = N-formyl-L-kynurenine. The protein operates within amino-acid degradation; L-tryptophan degradation via kynurenine pathway; L-kynurenine from L-tryptophan: step 1/2. Functionally, heme-dependent dioxygenase that catalyzes the oxidative cleavage of the L-tryptophan (L-Trp) pyrrole ring and converts L-tryptophan to N-formyl-L-kynurenine. Catalyzes the oxidative cleavage of the indole moiety. This chain is Tryptophan 2,3-dioxygenase, found in Pseudomonas fluorescens (strain ATCC BAA-477 / NRRL B-23932 / Pf-5).